The chain runs to 93 residues: Large ribosomal subunit protein uL23cz/uL23cy (93 aa).

Belongs to the universal ribosomal protein uL23 family. Part of the 50S ribosomal subunit.

Its subcellular location is the plastid. The protein localises to the chloroplast. In terms of biological role, binds to 23S rRNA. This Panax ginseng (Korean ginseng) protein is Large ribosomal subunit protein uL23cz/uL23cy (rpl23-A).